A 230-amino-acid polypeptide reads, in one-letter code: Somatolactin (230 aa).

A signal peptide spans 1 to 23; that stretch reads MMTAVKQSGVWAVLLWPYLLAVS. Cystine bridges form between cysteine 28-cysteine 38, cysteine 88-cysteine 204, and cysteine 221-cysteine 229. N-linked (GlcNAc...) asparagine glycosylation is found at asparagine 34 and asparagine 144.

Belongs to the somatotropin/prolactin family. As to expression, pituitary gland.

It is found in the secreted. The protein is Somatolactin of Solea senegalensis (Senegalese sole).